The following is a 144-amino-acid chain: Large ribosomal subunit protein uL15 (144 aa).

The segment at 1-48 (MRLNTLSPAAGSKSAAKRVGRGIGSGTGKTCGRGHKGQKSRSGGGVRI) is disordered. Over residues 21-31 (RGIGSGTGKTC) the composition is skewed to gly residues.

Belongs to the universal ribosomal protein uL15 family. As to quaternary structure, part of the 50S ribosomal subunit.

In terms of biological role, binds to the 23S rRNA. In Shewanella woodyi (strain ATCC 51908 / MS32), this protein is Large ribosomal subunit protein uL15.